Consider the following 85-residue polypeptide: HssA/B-like protein 59 (85 aa).

It belongs to the hssA/B family.

This chain is HssA/B-like protein 59 (hssl59), found in Dictyostelium discoideum (Social amoeba).